A 159-amino-acid polypeptide reads, in one-letter code: Keratin-associated protein 11-1 (159 aa).

4 tandem repeats follow at residues 107–116 (CQPLSGVSTV), 117–126 (CKPVRSISTV), 127–136 (CQPVGGVSTI), and 137–146 (CQPTCGVSRT). Residues 107–146 (CQPLSGVSTVCKPVRSISTVCQPVGGVSTICQPTCGVSRT) form a 4 X 10 AA approximate repeats region.

This sequence belongs to the PMG family. Wool.

In the wool cortex, wool keratin intermediate filaments are embedded in an interfilamentous matrix, consisting of wool keratin-associated proteins (KRTAP), which are essential for the formation of a rigid and resistant wool shaft through their extensive disulfide bond cross-linking with abundant cysteine residues of wool keratins. The matrix proteins include the high-sulfur and high-glycine-tyrosine keratins. The sequence is that of Keratin-associated protein 11-1 (KRTAP11-1) from Capra hircus (Goat).